Here is a 64-residue protein sequence, read N- to C-terminus: Conotoxin VnMLCL-033 (64 aa).

The N-terminal stretch at 1–19 (MLCLPVFIILLLLASPAAP) is a signal peptide. Positions 20–43 (NPLQTRIQSNLIRAGPEDANIKTD) are excised as a propeptide. At Ile-63 the chain carries Isoleucine amide.

The protein belongs to the conotoxin T superfamily. Expressed by the venom duct.

Its subcellular location is the secreted. This Conus ventricosus (Mediterranean cone) protein is Conotoxin VnMLCL-033.